Here is a 585-residue protein sequence, read N- to C-terminus: A-type ATP synthase subunit A (585 aa).

237 to 244 (GPFGSGKT) is an ATP binding site.

This sequence belongs to the ATPase alpha/beta chains family. Has multiple subunits with at least A(3), B(3), C, D, E, F, H, I and proteolipid K(x).

It localises to the cell membrane. The catalysed reaction is ATP + H2O + 4 H(+)(in) = ADP + phosphate + 5 H(+)(out). Component of the A-type ATP synthase that produces ATP from ADP in the presence of a proton gradient across the membrane. The A chain is the catalytic subunit. In Natronomonas pharaonis (strain ATCC 35678 / DSM 2160 / CIP 103997 / JCM 8858 / NBRC 14720 / NCIMB 2260 / Gabara) (Halobacterium pharaonis), this protein is A-type ATP synthase subunit A.